Reading from the N-terminus, the 336-residue chain is Ankyrin repeat and SOCS box protein 1 (336 aa).

ANK repeat units follow at residues 37 to 69, 78 to 107, 111 to 140, 144 to 173, 192 to 221, and 236 to 266; these read CDDTRLHDAAYVGDLQTLRNLLQEESYRSRINE, LPCTPLRIAATAGHGNCVDFLIRKGAEVDL, KGQTALYVAVVNGHLESTEILLEAGADPNG, HRSTPVYHASRVGRDDILKALIRYGADVDV, LVVCPLYISAAYHNLQCFRLLLQAGANPDF, and SPGCVMDAVLRHGCEAAFVSLLVEFGANLNL. In terms of domain architecture, SOCS box spans 287–336; the sequence is LQVFKEARSIPRTLLSLCRVAVRRALGKYRLHLVPSLPLPDPIKKFLLYE.

It belongs to the ankyrin SOCS box (ASB) family. In terms of assembly, interacts with CUL5 and RNF7. In terms of tissue distribution, highest expression in testis, spleen, bone marrow and salivary gland.

It participates in protein modification; protein ubiquitination. In terms of biological role, probable substrate-recognition component of a SCF-like ECS (Elongin-Cullin-SOCS-box protein) E3 ligase complex which mediates the ubiquitination and subsequent proteasomal degradation of target proteins. Mediates Notch-induced ubiquitination and degradation of TCF3/E2A and JAK2. May play a role in testis development. In Mus musculus (Mouse), this protein is Ankyrin repeat and SOCS box protein 1 (Asb1).